A 260-amino-acid chain; its full sequence is Acyl-coenzyme A diphosphatase FITM2 (260 aa).

At 1–23 (MERLENCAQMFQRRFLNESFRRH) the chain is on the cytoplasmic side. The chain crosses the membrane as a helical span at residues 24-44 (CPVLLACIVLGGSLLKELCPL). Topologically, residues 45 to 57 (PDSYWNNKRNVLN) are lumenal. The helical transmembrane segment at 58 to 78 (VYFVKFSWGWTLWLLLPFIAL) threads the bilayer. Residues 79-93 (TNYKLTRSTTKVLRR) are Cytoplasmic-facing. The chain crosses the membrane as a helical span at residues 94–114 (LSSLLVSTLIWYLCTNLFLYI). The Lumenal segment spans residues 115–145 (ENITGSCYESEAMSDPKEHQDRRECRLHSGY). The helical transmembrane segment at 146–166 (WHGFDISGHCFLLSYCILLIL) threads the bilayer. His-154 is a catalytic residue. Residues 167–189 (EETSIISNIRFERHWHRMAINAQ) lie on the Cytoplasmic side of the membrane. Transmembrane regions (helical) follow at residues 190–210 (FAAL…TAVY) and 211–231 (FHNI…WYIT). The active site involves His-212. Residues 232 to 260 (YRWWYLQPISPGLPPASASRSGKEPIYRN) are Cytoplasmic-facing.

It belongs to the FIT family. FIT2 subfamily.

It is found in the endoplasmic reticulum membrane. It carries out the reaction an acyl-CoA + H2O = an acyl-4'-phosphopantetheine + adenosine 3',5'-bisphosphate + 2 H(+). Fatty acyl-coenzyme A (CoA) diphosphatase that hydrolyzes fatty acyl-CoA to yield acyl-4'-phosphopantetheine and adenosine 3',5'-bisphosphate. Preferentially hydrolyzes unsaturated long-chain acyl-CoA substrates in the endoplasmic reticulum (ER) lumen. This catalytic activity is required for maintaining ER structure and for lipid droplets (LDs) biogenesis, which are lipid storage organelles involved in maintaining lipid and energy homeostasis. May directly bind to diacylglycerol (DAGs) and triacylglycerol, which is also important for LD biogenesis. May support directional budding of nacent LDs from the ER into the cytosol by reducing DAG levels at sites of LD formation. May play a role in the regulation of cell morphology, ER morphology and cytoskeletal organization. This chain is Acyl-coenzyme A diphosphatase FITM2, found in Xenopus tropicalis (Western clawed frog).